The sequence spans 1320 residues: Tetratricopeptide repeat protein 21A (1320 aa).

19 TPR repeats span residues 4–38, 110–143, 146–180, 181–213, 215–247, 334–367, 502–534, 572–605, 728–761, 762–795, 797–828, 837–869, 889–922, 924–956, 957–990, 1028–1061, 1201–1234, 1236–1268, and 1270–1303; these read NDSSLMAGIIYYSQEKYFHHVQQAAAVGLEKFSND, GTALYYAGLFLWLIGRHDKAKEYIDRMLKISRGF, AYVLRGWVDLTSDKPHTAKKAIEYLEQGIQDTKDV, LGLMGKAMYFMMQQNYSEALEVVNQITVTSGSF, PALVLKMQLFLARQDWEQTVEMGHRILEKDESN, VHVATELGYLFILKNQVKEALLWYSEAMKLDKDG, IDPLYLMAQVRYYSELENAQSILQRCLELDPAS, PLYHLIKARALNKAGDYPEAIKTLKMVIKLPALK, PHTSLLLGDALMSILEPEKALEVYDEAYRQNPHD, ASLASRIGHAYVKAHQYTEAIEYYEAAQKINGQD, LCCDLGKLLLKLKKVNKAEKVLKQALEHDIVQ, VKCLLLLAKVYKSHKKEAVIETLNKALDLQSRI, ASICIQFAEHYLAEKEYDKAVQSYKDVFSYLPTD, KVMLELAQLYLLQGHLDLCEQHCAILLQTEQNH, ETASVLMADLMFRKQKHEAAINLYHQVLEKAPDN, PGFNYCRGIYCWHIGQPNEALKFLNKARKDSTWG, EKSWLLLADIYCQGSKFDLALELLRRCVQYNKSC, KAYEYMGFIMEKEQSYKDAVTNYKLAWKYSHHA, and PAIGFKLAFNYLKDKKFVEAIEICNDVLREHPDY.

It belongs to the TTC21 family. Interacts with IFT20. Interacts with IFT52. Interacts with IFT140. Interacts with CEP78; regulating IFT20 stability and localization. Strongly expressed in testis.

Its function is as follows. Intraflagellar transport (IFT)-associated protein required for spermatogenesis. Required for sperm flagellar formation and intraflagellar transport. The sequence is that of Tetratricopeptide repeat protein 21A from Homo sapiens (Human).